The sequence spans 120 residues: Large ribosomal subunit protein bL17 (120 aa).

This sequence belongs to the bacterial ribosomal protein bL17 family. Part of the 50S ribosomal subunit. Contacts protein L32.

This is Large ribosomal subunit protein bL17 from Geobacillus sp. (strain WCH70).